The following is a 218-amino-acid chain: Guanylate kinase (218 aa).

Positions 10–190 (GLLIILSSPS…TEERLKTIIT (181 aa)) constitute a Guanylate kinase-like domain. Position 17–24 (17–24 (SPSGAGKS)) interacts with ATP.

This sequence belongs to the guanylate kinase family.

The protein resides in the cytoplasm. The enzyme catalyses GMP + ATP = GDP + ADP. Essential for recycling GMP and indirectly, cGMP. In Jannaschia sp. (strain CCS1), this protein is Guanylate kinase.